Consider the following 220-residue polypeptide: Ras-related protein Rab-3A (220 aa).

GTP contacts are provided by Ser31, Ser32, Val33, Gly34, Lys35, Thr36, Ser37, Thr48, Pro49, Ser53, and Thr54. Mg(2+) is bound at residue Thr36. The short motif at 49-58 (PAFVSTVGID) is the Switch 1 element. 2 residues coordinate Mg(2+): Thr54 and Asp77. Gly80 contacts GTP. The Switch 2 signature appears at 80-96 (GQERYRTITTAYYRGAM). Phosphothreonine; by LRRK2 is present on Thr86. GTP is bound by residues Asn135, Lys136, Asp138, Ala166, and Lys167. Ser188 and Ser190 each carry phosphoserine. A disordered region spans residues 194–220 (ADPAVTGAKQGPQLSDQQVPPHQDCAC). Residues Cys218 and Cys220 are each lipidated (S-geranylgeranyl cysteine). Cys220 carries the cysteine methyl ester modification.

It belongs to the small GTPase superfamily. Rab family. In terms of assembly, interacts with RIMS1 and RIMS2. Interacts with Rabphilin-3A/RPH3A and Rab effector Noc2/RPH3AL. Interacts with SYTL4. Interacts with RAB3IP. Interacts with SGSM1 and SGSM3. Interacts with SYT1. Interacts with MYH9; this interaction is essential for lysosome exocytosis and plasma membrane repair. Interacts with STXBP1; this interaction promotes RAB3A dissociation from the vesicle membrane. Interacts with SNCA. The GTP-bound form interacts with REP15. Interacts with GDI1, GDI2, CHM and CHML; phosphorylation at Thr-86 disrupts these interactions. Interacts with MADD (via uDENN domain); the GTP-bound form is preferred for interaction. Mg(2+) serves as cofactor. Phosphorylation of Thr-86 in the switch II region by LRRK2 prevents the association of RAB regulatory proteins, including CHM, CHML and RAB GDP dissociation inhibitors GDI1 and GDI2. As to expression, specifically expressed in brain.

The protein localises to the cytoplasm. It is found in the cytosol. The protein resides in the lysosome. It localises to the cytoplasmic vesicle. Its subcellular location is the secretory vesicle. The protein localises to the cell projection. It is found in the axon. The protein resides in the cell membrane. It localises to the presynapse. Its subcellular location is the postsynapse. The enzyme catalyses GTP + H2O = GDP + phosphate + H(+). Its activity is regulated as follows. Regulated by guanine nucleotide exchange factors (GEFs) including RAB3IL1 and MADD which promote the exchange of bound GDP for free GTP. Regulated by GTPase activating proteins (GAPs) including RAB3GAP1 and TBC1D10B which increase the GTP hydrolysis activity. Inhibited by GDP dissociation inhibitors (GDIs) which prevent Rab-GDP dissociation. In terms of biological role, the small GTPases Rab are key regulators of intracellular membrane trafficking, from the formation of transport vesicles to their fusion with membranes. Rabs cycle between an inactive GDP-bound form and an active GTP-bound form that is able to recruit to membranes different sets of downstream effectors directly responsible for vesicle formation, movement, tethering and fusion. RAB3A plays a central role in regulated exocytosis and secretion. Controls the recruitment, tethering and docking of secretory vesicles to the plasma membrane. Upon stimulation, switches to its active GTP-bound form, cycles to vesicles and recruits effectors such as RIMS1, RIMS2, Rabphilin-3A/RPH3A, RPH3AL or SYTL4 to help the docking of vesicules onto the plasma membrane. Upon GTP hydrolysis by GTPase-activating protein, dissociates from the vesicle membrane allowing the exocytosis to proceed. Stimulates insulin secretion through interaction with RIMS2 or RPH3AL effectors in pancreatic beta cells. Regulates calcium-dependent lysosome exocytosis and plasma membrane repair (PMR) via the interaction with 2 effectors, SYTL4 and myosin-9/MYH9. Acts as a positive regulator of acrosome content secretion in sperm cells by interacting with RIMS1. Also plays a role in the regulation of dopamine release by interacting with synaptotagmin I/SYT. This is Ras-related protein Rab-3A from Homo sapiens (Human).